The primary structure comprises 736 residues: Dynamin-1-like protein (736 aa).

At Met-1 the chain carries N-acetylmethionine. The Dynamin-type G domain occupies 22–302 (IIQLPQIVVV…LMHHIRDCLP (281 aa)). Residues 32–39 (GTQSSGKS) are G1 motif. Residue 32-40 (GTQSSGKSS) coordinates GTP. Residues 58–60 (VTR) form a G2 motif region. Residues 146 to 149 (DLPG) are G3 motif. Positions 215–218 (TKLD) are G4 motif. GTP is bound by residues 215–221 (TKLDLMD) and 246–249 (NRSQ). Positions 245–248 (VNRS) are G5 motif. Positions 344–489 (YCNTIEGTAK…NEMVHNLVAI (146 aa)) are middle domain. An interaction with GSK3B region spans residues 448-685 (NYSTQELLRF…NHVKDTLQSE (238 aa)). A b domain region spans residues 502 to 569 (ADACGLMNNN…IQDSRRETKN (68 aa)). A disordered region spans residues 523–590 (ELPSAVSRDK…VQEPTTGNWR (68 aa)). At Ser-529 the chain carries Phosphoserine. Glycyl lysine isopeptide (Lys-Gly) (interchain with G-Cter in SUMO) cross-links involve residues Lys-532 and Lys-535. The segment covering 537 to 554 (PSALAPASQEPSPAASAE) has biased composition (low complexity). Ser-548 is modified (phosphoserine). A compositionally biased stretch (basic and acidic residues) spans 555–568 (ADGKLIQDSRRETK). Glycyl lysine isopeptide (Lys-Gly) (interchain with G-Cter in SUMO) cross-links involve residues Lys-558 and Lys-568. O-linked (GlcNAc) threonine glycosylation is found at Thr-585 and Thr-586. Residue Lys-594 forms a Glycyl lysine isopeptide (Lys-Gly) (interchain with G-Cter in SUMO) linkage. Lys-597 carries the N6-acetyllysine; alternate modification. Lys-597 is covalently cross-linked (Glycyl lysine isopeptide (Lys-Gly) (interchain with G-Cter in SUMO); alternate). A Glycyl lysine isopeptide (Lys-Gly) (interchain with G-Cter in SUMO) cross-link involves residue Lys-606. Position 607 is a phosphoserine (Ser-607). Lys-608 is covalently cross-linked (Glycyl lysine isopeptide (Lys-Gly) (interchain with G-Cter in SUMO)). At Ser-616 the chain carries Phosphoserine; by CDK1 and PINK1. A Phosphoserine; by CAMK1 and PKA modification is found at Ser-637. Cys-644 bears the S-nitrosocysteine mark. Residues 644–735 (CEVIERLIKS…IIAEIRETHL (92 aa)) form the GED domain. An important for homodimerization region spans residues 654 to 668 (YFLIVRKNIQDSVPK).

This sequence belongs to the TRAFAC class dynamin-like GTPase superfamily. Dynamin/Fzo/YdjA family. Homotetramer; dimerizes through the N-terminal GTP-middle region of one molecule binding to the GED domain of another DNM1L molecule. Oligomerizes in a GTP-dependent manner to form membrane-associated tubules with a spiral pattern. Interacts with GSK3B and MARCHF5. Interacts (via the GTPase and B domains) with UBE2I; the interaction promotes sumoylation of DNM1L, mainly in its B domain. Interacts with PPP3CA; the interaction dephosphorylates DNM1L and regulates its transition to mitochondria. Interacts with BCL2L1 isoform BCL-X(L) and CLTA; DNM1L and BCL2L1 isoform BCL-X(L) may form a complex in synaptic vesicles that also contains clathrin and MFF. Interacts with MFF; the interaction is inhibited by C11orf65/MFI. Interacts with FIS1; may form part of a larger protein complex at the endoplasmic reticulum-mitochondrial interface during mitochondrial fission. Interacts with CANX. Interacts with BCAP31. Interacts with MIEF2 and MIEF1; GTP-dependent, regulates GTP hydrolysis and DNM1L oligomerization. Interacts with PGAM5; this interaction leads to dephosphorylation at Ser-656 and activation of GTPase activity and eventually to mitochondria fragmentation. Interacts with RALBP1; during mitosis, recruits DNM1L to the mitochondrion and mediates its activation by the mitotic kinase cyclin B-CDK1. Interacts with FUNDC1; this interaction recruits DNM1L/DRP1 at ER-mitochondria contact sites. Post-translationally, phosphorylation/dephosphorylation events on two sites near the GED domain regulate mitochondrial fission. Phosphorylation on Ser-637 by CAMK1 and PKA inhibits the GTPase activity, leading to a defect in mitochondrial fission promoting mitochondrial elongation. Dephosphorylated on this site by PPP3CA which promotes mitochondrial fission. Phosphorylation on Ser-616 by CDK1 and PINK1 activates the GTPase activity and promotes mitochondrial fission. Phosphorylated in a circadian manner at Ser-637. Dephosphorylated by PGAM5. Sumoylated on various lysine residues within the B domain, probably by MUL1. Sumoylation positively regulates mitochondrial fission. Desumoylated by SENP5 during G2/M transition of mitosis. Appears to be linked to its catalytic activity. In terms of processing, S-nitrosylation increases DNM1L dimerization, mitochondrial fission and causes neuronal damage. Post-translationally, ubiquitination by MARCHF5 affects mitochondrial morphology. O-GlcNAcylation augments the level of the GTP-bound active form of DNM1L and induces translocation from the cytoplasm to mitochondria in cardiomyocytes. It also decreases phosphorylation at Ser-637. Ubiquitously expressed with highest levels found in skeletal muscles, heart, kidney and brain. Isoform 1 is brain-specific. Isoform 2 and isoform 3 are predominantly expressed in testis and skeletal muscles respectively. Isoform 4 is weakly expressed in brain, heart and kidney. Isoform 5 is dominantly expressed in liver, heart and kidney. Isoform 6 is expressed in neurons.

The protein localises to the cytoplasm. It localises to the cytosol. Its subcellular location is the golgi apparatus. It is found in the endomembrane system. The protein resides in the mitochondrion outer membrane. The protein localises to the peroxisome. It localises to the membrane. Its subcellular location is the clathrin-coated pit. It is found in the cytoplasmic vesicle. The protein resides in the secretory vesicle. The protein localises to the synaptic vesicle membrane. It carries out the reaction GTP + H2O = GDP + phosphate + H(+). Its activity is regulated as follows. GTPase activity is increased by binding to phospholipid membranes. In terms of biological role, functions in mitochondrial and peroxisomal division. Mediates membrane fission through oligomerization into membrane-associated tubular structures that wrap around the scission site to constrict and sever the mitochondrial membrane through a GTP hydrolysis-dependent mechanism. The specific recruitment at scission sites is mediated by membrane receptors like MFF, MIEF1 and MIEF2 for mitochondrial membranes. While the recruitment by the membrane receptors is GTP-dependent, the following hydrolysis of GTP induces the dissociation from the receptors and allows DNM1L filaments to curl into closed rings that are probably sufficient to sever a double membrane. Acts downstream of PINK1 to promote mitochondrial fission in a PRKN-dependent manner. Plays an important role in mitochondrial fission during mitosis. Through its function in mitochondrial division, ensures the survival of at least some types of postmitotic neurons, including Purkinje cells, by suppressing oxidative damage. Required for normal brain development, including that of cerebellum. Facilitates developmentally regulated apoptosis during neural tube formation. Required for a normal rate of cytochrome c release and caspase activation during apoptosis; this requirement may depend upon the cell type and the physiological apoptotic cues. Required for formation of endocytic vesicles. Proposed to regulate synaptic vesicle membrane dynamics through association with BCL2L1 isoform Bcl-X(L) which stimulates its GTPase activity in synaptic vesicles; the function may require its recruitment by MFF to clathrin-containing vesicles. Required for programmed necrosis execution. Rhythmic control of its activity following phosphorylation at Ser-637 is essential for the circadian control of mitochondrial ATP production. Inhibits peroxisomal division when overexpressed. This is Dynamin-1-like protein from Homo sapiens (Human).